The primary structure comprises 402 residues: GDSL esterase/lipase At1g20120 (402 aa).

The N-terminal stretch at 1–35 (MLQDRVSGSLSSSKISRCVLFLSLFCFFLLTMHAS) is a signal peptide. Residues 41-69 (RVPNPGPSPAPEPKPCPSPGPNPAPATTK) form a disordered region. Residues 44-64 (NPGPSPAPEPKPCPSPGPNPA) show a composition bias toward pro residues. N73 is a glycosylation site (N-linked (GlcNAc...) asparagine). S85 functions as the Nucleophile in the catalytic mechanism. N314 and N367 each carry an N-linked (GlcNAc...) asparagine glycan. Catalysis depends on residues D375 and H378.

Belongs to the 'GDSL' lipolytic enzyme family.

It localises to the secreted. The sequence is that of GDSL esterase/lipase At1g20120 from Arabidopsis thaliana (Mouse-ear cress).